The chain runs to 548 residues: Multidrug efflux system permease protein Rv1217c (548 aa).

12 consecutive transmembrane segments (helical) span residues Val39 to Ser59, Gly99 to Ile119, Ala148 to Leu168, Val178 to Ala198, Ala210 to Ser230, Trp253 to Leu273, Leu313 to Ile333, Ala359 to Leu379, Leu410 to Leu430, Ala450 to Leu470, Val477 to Phe497, and Val521 to Phe541.

As to quaternary structure, the complex is probably composed of two ATP-binding proteins (Rv1218c) and a transmembrane protein (Rv1217c).

It is found in the cell inner membrane. Functionally, probably part of the ABC transporter complex Rv1217c-Rv1218c involved in the resistance to a wide range of structurally unrelated drugs. Probably responsible for the translocation of the substrate across the membrane. The sequence is that of Multidrug efflux system permease protein Rv1217c from Mycobacterium tuberculosis (strain ATCC 25618 / H37Rv).